The primary structure comprises 429 residues: Adenylosuccinate synthetase (429 aa).

Residues 12-18 and 40-42 each bind GTP; these read GDEGKGK and GHT. Aspartate 13 serves as the catalytic Proton acceptor. Positions 13 and 40 each coordinate Mg(2+). IMP-binding positions include 13 to 16, 38 to 41, threonine 128, arginine 142, glutamine 223, threonine 238, and arginine 302; these read DEGK and NAGH. The active-site Proton donor is histidine 41. 298–304 provides a ligand contact to substrate; sequence ATTGRKR. GTP contacts are provided by residues arginine 304, 330 to 332, and 412 to 414; these read KLD and GTG.

It belongs to the adenylosuccinate synthetase family. As to quaternary structure, homodimer. Mg(2+) serves as cofactor.

It localises to the cytoplasm. It carries out the reaction IMP + L-aspartate + GTP = N(6)-(1,2-dicarboxyethyl)-AMP + GDP + phosphate + 2 H(+). The protein operates within purine metabolism; AMP biosynthesis via de novo pathway; AMP from IMP: step 1/2. In terms of biological role, plays an important role in the de novo pathway of purine nucleotide biosynthesis. Catalyzes the first committed step in the biosynthesis of AMP from IMP. This Tropheryma whipplei (strain TW08/27) (Whipple's bacillus) protein is Adenylosuccinate synthetase.